The sequence spans 539 residues: G protein-coupled receptor associated sorting protein 3 (539 aa).

Residues 1–10 (MTGSKNKARA) are compositionally biased toward basic residues. Disordered regions lie at residues 1 to 112 (MTGS…NWFW) and 134 to 172 (VAKC…EENV). Composition is skewed to basic and acidic residues over residues 66–80 (VVAE…ESKA) and 88–106 (FNHR…DKPS). Over residues 134 to 146 (VAKCENKPSTSIQ) the composition is skewed to polar residues.

This sequence belongs to the GPRASP family. In terms of assembly, homodimer.

Its subcellular location is the cytoplasm. It localises to the nucleus. Its function is as follows. Survival and differentiation promoting protein that plays a role in the regulation of neurosynaptogenesis. Induces phosphatase PP2A activity which results in APP dephosphorylation and inhibits BACE1-mediated processing of APP. The polypeptide is G protein-coupled receptor associated sorting protein 3 (Gprasp3) (Mus musculus (Mouse)).